The chain runs to 329 residues: Major outer membrane protein P.IB (329 aa).

A signal peptide spans 1–19 (MKKSLIALTLAALPVAAMA).

The protein belongs to the Gram-negative porin family. Homotrimer.

It localises to the cell outer membrane. Serves as a slightly cation selective porin. The polypeptide is Major outer membrane protein P.IB (porB) (Neisseria meningitidis serogroup A / serotype 4A (strain DSM 15465 / Z2491)).